The primary structure comprises 62 residues: Synergistic-type venom protein S2C4 (62 aa).

3 disulfide bridges follow: Cys3–Cys24, Cys17–Cys42, and Cys46–Cys57.

This sequence belongs to the three-finger toxin family. Short-chain subfamily. Aminergic toxin sub-subfamily. In terms of assembly, homodimer; disulfide-linked. In terms of tissue distribution, expressed by the venom gland.

Its subcellular location is the secreted. This protein shows a synergetic toxic effect in that it enhances the toxicity of other toxins. The polypeptide is Synergistic-type venom protein S2C4 (Dendroaspis jamesoni kaimosae (Eastern Jameson's mamba)).